The primary structure comprises 637 residues: Chaperone protein HtpG (637 aa).

An a; substrate-binding region spans residues 1-345 (MSQQETHGFQ…SNDLPLNVSR (345 aa)). The b stretch occupies residues 346–562 (EILQDNHITK…EGEMSTQMIK (217 aa)). Residues 563–637 (LMQAAGQPVP…MNQMLLANLK (75 aa)) are c.

Belongs to the heat shock protein 90 family. Homodimer.

Its subcellular location is the cytoplasm. In terms of biological role, molecular chaperone. Has ATPase activity. This is Chaperone protein HtpG from Shewanella oneidensis (strain ATCC 700550 / JCM 31522 / CIP 106686 / LMG 19005 / NCIMB 14063 / MR-1).